The sequence spans 193 residues: MAERRVPFTFLTSPSWEPFRDWYHGSRLFDQSFGMPHIPEDWYKWPSGSAWPGYFRLLPSESALLPAPGSPYGRALSELSSGISEIRQSADSWKVTLDVNHFAPEELVVKTKDNIVEITGKHEEKQDEHGFISRCFTRKYTLPPGVEATAVRSSLSPDGMLTVEAPLPKPAIQSSEITIPVTVEAKKEEPAKK.

Phosphoserine occurs at positions 15 and 80. In terms of domain architecture, sHSP spans 74–182; it reads RALSELSSGI…QSSEITIPVT (109 aa).

Belongs to the small heat shock protein (HSP20) family. In terms of assembly, homooligomer. Homodimer; becomes monomeric upon activation. Heterooligomer. In terms of tissue distribution, smooth, cardiac and skeletal muscle, hardly detectable in fibroblasts or focal contacts.

The protein localises to the cytoplasm. Its subcellular location is the nucleus. It localises to the cytoskeleton. The protein resides in the spindle. In terms of biological role, small heat shock protein which functions as a molecular chaperone probably maintaining denatured proteins in a folding-competent state. Plays a role in stress resistance and actin organization. In Gallus gallus (Chicken), this protein is Heat shock protein beta-1 (HSPB1).